The sequence spans 218 residues: Glutathione S-transferase Mu 6 (218 aa).

Residues 1-88 form the GST N-terminal domain; sequence MPVTLGYWDI…YLGRKHNLCG (88 aa). Glutathione is bound by residues 7-8, 46-50, 59-60, and 72-73; these read YW, WLNDK, NL, and QS. The region spanning 90 to 208 is the GST C-terminal domain; sequence TEEERIRVDI…KTSRFLPSPV (119 aa). Tyrosine 116 provides a ligand contact to substrate.

The protein belongs to the GST superfamily. Mu family. In terms of assembly, homodimer. In terms of tissue distribution, expressed in liver, stomach and small intestine. Not expressed in spleen, kidney, colon, heart, muscle, brain or lung.

It localises to the cytoplasm. The enzyme catalyses RX + glutathione = an S-substituted glutathione + a halide anion + H(+). Conjugation of reduced glutathione to a wide number of exogenous and endogenous hydrophobic electrophiles. The chain is Glutathione S-transferase Mu 6 (Gstm6) from Mus musculus (Mouse).